The following is a 154-amino-acid chain: RNA-binding protein PAB1135 (154 aa).

As to quaternary structure, homodimer in solution.

In vitro, binds efficiently double-stranded RNAs in a non-sequence specific manner. This is RNA-binding protein PAB1135 from Pyrococcus abyssi (strain GE5 / Orsay).